Consider the following 587-residue polypeptide: Arginine--tRNA ligase (587 aa).

A 'HIGH' region motif is present at residues 127–137; it reads ANPTGPLHVGH.

The protein belongs to the class-I aminoacyl-tRNA synthetase family. As to quaternary structure, monomer.

It is found in the cytoplasm. It catalyses the reaction tRNA(Arg) + L-arginine + ATP = L-arginyl-tRNA(Arg) + AMP + diphosphate. In Dechloromonas aromatica (strain RCB), this protein is Arginine--tRNA ligase.